A 330-amino-acid polypeptide reads, in one-letter code: Anthranilate phosphoribosyltransferase (330 aa).

Residues Gly-75, 78–79 (GD), Thr-83, 85–88 (NVST), 103–111 (KHGNRAASS), and Ala-115 contribute to the 5-phospho-alpha-D-ribose 1-diphosphate site. Residue Gly-75 coordinates anthranilate. Residue Ser-87 coordinates Mg(2+). Asn-106 is an anthranilate binding site. Arg-161 is an anthranilate binding site. 2 residues coordinate Mg(2+): Asp-220 and Glu-221.

This sequence belongs to the anthranilate phosphoribosyltransferase family. Homodimer. Mg(2+) is required as a cofactor.

It catalyses the reaction N-(5-phospho-beta-D-ribosyl)anthranilate + diphosphate = 5-phospho-alpha-D-ribose 1-diphosphate + anthranilate. The protein operates within amino-acid biosynthesis; L-tryptophan biosynthesis; L-tryptophan from chorismate: step 2/5. Catalyzes the transfer of the phosphoribosyl group of 5-phosphorylribose-1-pyrophosphate (PRPP) to anthranilate to yield N-(5'-phosphoribosyl)-anthranilate (PRA). This chain is Anthranilate phosphoribosyltransferase, found in Erythrobacter litoralis (strain HTCC2594).